Here is a 203-residue protein sequence, read N- to C-terminus: Putative 3-methyladenine DNA glycosylase (203 aa).

This sequence belongs to the DNA glycosylase MPG family.

The sequence is that of Putative 3-methyladenine DNA glycosylase from Clostridium beijerinckii (strain ATCC 51743 / NCIMB 8052) (Clostridium acetobutylicum).